A 501-amino-acid polypeptide reads, in one-letter code: Ribulose bisphosphate carboxylase large chain (501 aa).

Positions 141 and 191 each coordinate substrate. The active-site Proton acceptor is the K193. Position 195 (K195) interacts with substrate. 3 residues coordinate Mg(2+): K219, D221, and E222. K219 is modified (N6-carboxylysine). H311 acts as the Proton acceptor in catalysis. 3 residues coordinate substrate: R312, H344, and S396.

Belongs to the RuBisCO large chain family. Type I subfamily. Heterohexadecamer of 8 large chains and 8 small chains. Requires Mg(2+) as cofactor.

It carries out the reaction 2 (2R)-3-phosphoglycerate + 2 H(+) = D-ribulose 1,5-bisphosphate + CO2 + H2O. The enzyme catalyses D-ribulose 1,5-bisphosphate + O2 = 2-phosphoglycolate + (2R)-3-phosphoglycerate + 2 H(+). Its function is as follows. RuBisCO catalyzes two reactions: the carboxylation of D-ribulose 1,5-bisphosphate, the primary event in carbon dioxide fixation, as well as the oxidative fragmentation of the pentose substrate. Both reactions occur simultaneously and in competition at the same active site. The protein is Ribulose bisphosphate carboxylase large chain of Paraburkholderia phymatum (strain DSM 17167 / CIP 108236 / LMG 21445 / STM815) (Burkholderia phymatum).